Here is a 570-residue protein sequence, read N- to C-terminus: Hydroxylamine reductase (570 aa).

[4Fe-4S] cluster is bound by residues Cys5, Cys8, Cys17, and Cys23. Residues His266, Glu290, Cys334, Cys425, Cys453, Cys478, Glu513, and Lys515 each contribute to the hybrid [4Fe-2O-2S] cluster site. Position 425 is a cysteine persulfide (Cys425).

The protein belongs to the HCP family. [4Fe-4S] cluster serves as cofactor. Requires hybrid [4Fe-2O-2S] cluster as cofactor.

It is found in the cytoplasm. It catalyses the reaction A + NH4(+) + H2O = hydroxylamine + AH2 + H(+). Its function is as follows. Catalyzes the reduction of hydroxylamine to form NH(3) and H(2)O. The sequence is that of Hydroxylamine reductase from Clostridium botulinum (strain ATCC 19397 / Type A).